We begin with the raw amino-acid sequence, 85 residues long: Putative membrane protein insertion efficiency factor (85 aa).

It belongs to the UPF0161 family.

It localises to the cell inner membrane. In terms of biological role, could be involved in insertion of integral membrane proteins into the membrane. The sequence is that of Putative membrane protein insertion efficiency factor from Tolumonas auensis (strain DSM 9187 / NBRC 110442 / TA 4).